The sequence spans 228 residues: L-ribulose-5-phosphate 4-epimerase UlaF (228 aa).

Substrate-binding positions include 26–27, 43–44, and 72–73; these read GN, SG, and SS. Zn(2+)-binding residues include Asp74, His93, and His95. Asp118 (proton donor/acceptor) is an active-site residue. His167 lines the Zn(2+) pocket. Tyr225 serves as the catalytic Proton donor/acceptor.

It belongs to the aldolase class II family. AraD/FucA subfamily. Zn(2+) is required as a cofactor.

It catalyses the reaction L-ribulose 5-phosphate = D-xylulose 5-phosphate. It participates in cofactor degradation; L-ascorbate degradation; D-xylulose 5-phosphate from L-ascorbate: step 4/4. Catalyzes the isomerization of L-ribulose 5-phosphate to D-xylulose 5-phosphate. Is involved in the anaerobic L-ascorbate utilization. This Escherichia fergusonii (strain ATCC 35469 / DSM 13698 / CCUG 18766 / IAM 14443 / JCM 21226 / LMG 7866 / NBRC 102419 / NCTC 12128 / CDC 0568-73) protein is L-ribulose-5-phosphate 4-epimerase UlaF.